The chain runs to 345 residues: Phosphate acyltransferase (345 aa).

It belongs to the PlsX family. In terms of assembly, homodimer. Probably interacts with PlsY.

The protein resides in the cytoplasm. The enzyme catalyses a fatty acyl-[ACP] + phosphate = an acyl phosphate + holo-[ACP]. Its pathway is lipid metabolism; phospholipid metabolism. Functionally, catalyzes the reversible formation of acyl-phosphate (acyl-PO(4)) from acyl-[acyl-carrier-protein] (acyl-ACP). This enzyme utilizes acyl-ACP as fatty acyl donor, but not acyl-CoA. The sequence is that of Phosphate acyltransferase from Limosilactobacillus fermentum (strain NBRC 3956 / LMG 18251) (Lactobacillus fermentum).